The primary structure comprises 145 residues: Probable thioredoxin-2 (145 aa).

A Thioredoxin domain is found at 39–144 (VFDIDSVEDF…LDDFIEDVLA (106 aa)). Residues C68 and C71 each act as nucleophile in the active site. C68 and C71 form a disulfide bridge.

Belongs to the thioredoxin family.

Its function is as follows. Participates in various redox reactions through the reversible oxidation of its active center dithiol to a disulfide and catalyzes dithiol-disulfide exchange reactions. This chain is Probable thioredoxin-2 (trx-2), found in Caenorhabditis elegans.